The following is a 1434-amino-acid chain: Inositol hexakisphosphate and diphosphoinositol-pentakisphosphate kinase 1 (1434 aa).

A substrate-binding site is contributed by 66-67 (KK). ATP-binding positions include Arg-147, Lys-200, His-207, Arg-226, 250 to 253 (EEFM), and 259 to 261 (DVK). Substrate is bound at residue 226-227 (RK). Substrate-binding residues include Lys-261 and Arg-275. Residues Ser-277, Asp-322, and 334–336 (DVN) each bind ATP. Residue 339-342 (SFVK) participates in substrate binding. The segment at 384-455 (PTTSGTMMEL…VLDITRLLLA (72 aa)) is polyphosphoinositide-binding domain. The tract at residues 916–1017 (EGSAPAGCGF…PTEMKQSGLG (102 aa)) is disordered. Phosphoserine occurs at positions 941 and 984. Polar residues predominate over residues 1002-1017 (FSSSRPPTEMKQSGLG). A phosphoserine mark is found at Ser-1034, Ser-1070, Ser-1142, and Ser-1149. Disordered stretches follow at residues 1133–1193 (NHQA…GFSD), 1228–1251 (ESTQ…DTEV), and 1396–1434 (TDNP…EDIS). Residues 1165–1183 (SSGPSSTVSSAGPSSPTTV) show a composition bias toward low complexity. Over residues 1403 to 1434 (LSEETDLQAQEVSEEIDQEPEVVDELSNEDIS) the composition is skewed to acidic residues.

It belongs to the histidine acid phosphatase family. VIP1 subfamily.

It localises to the cytoplasm. Its subcellular location is the cytosol. The protein resides in the cell membrane. The enzyme catalyses 1D-myo-inositol hexakisphosphate + ATP = 1-diphospho-1D-myo-inositol 2,3,4,5,6-pentakisphosphate + ADP. It catalyses the reaction 5-diphospho-1D-myo-inositol 1,2,3,4,6-pentakisphosphate + ATP + H(+) = 1,5-bis(diphospho)-1D-myo-inositol 2,3,4,6-tetrakisphosphate + ADP. In terms of biological role, bifunctional inositol kinase that acts in concert with the IP6K kinases IP6K1, IP6K2 and IP6K3 to synthesize the diphosphate group-containing inositol pyrophosphates diphosphoinositol pentakisphosphate, PP-InsP5, and bis-diphosphoinositol tetrakisphosphate, (PP)2-InsP4. PP-InsP5 and (PP)2-InsP4, also respectively called InsP7 and InsP8, regulate a variety of cellular processes, including apoptosis, vesicle trafficking, cytoskeletal dynamics, exocytosis, insulin signaling and neutrophil activation. Phosphorylates inositol hexakisphosphate (InsP6) at position 1 to produce PP-InsP5 which is in turn phosphorylated by IP6Ks to produce (PP)2-InsP4. Alternatively, phosphorylates PP-InsP5 at position 1, produced by IP6Ks from InsP6, to produce (PP)2-InsP4. Activated when cells are exposed to hyperosmotic stress. The protein is Inositol hexakisphosphate and diphosphoinositol-pentakisphosphate kinase 1 of Rattus norvegicus (Rat).